A 132-amino-acid chain; its full sequence is uncharacterized protein (132 aa).

The N-terminal stretch at 1–25 (MRFTKVVGFLSVLGLAAVFPLTAQA) is a signal peptide.

This is an uncharacterized protein from Bacillus subtilis (strain 168).